Reading from the N-terminus, the 271-residue chain is Beta-lysine N(6)-acetyltransferase (271 aa).

The interval 86–122 (LRKDRGTGKNQKKKKISRKKDNWKKRKEKSRLPEGYT) is disordered. Over residues 95-114 (NQKKKKISRKKDNWKKRKEK) the composition is skewed to basic residues. Residues 121-269 (YTLRPAVQAD…GFEDMNIWCR (149 aa)) enclose the N-acetyltransferase domain.

This sequence belongs to the acetyltransferase family.

It carries out the reaction (3S)-3,6-diaminohexanoate + acetyl-CoA = (3S)-6-acetamido-3-aminohexanoate + CoA + H(+). Functionally, catalyzes the acetylation of beta-lysine to N6-acetyl-beta-lysine, a compatible solute produced by methanogenic archaea that helps cells to cope with salt stress. This is Beta-lysine N(6)-acetyltransferase from Methanosarcina mazei (strain ATCC BAA-159 / DSM 3647 / Goe1 / Go1 / JCM 11833 / OCM 88) (Methanosarcina frisia).